Consider the following 98-residue polypeptide: NADH-ubiquinone oxidoreductase chain 4L (98 aa).

3 helical membrane passes run 1–21 (MSLTYMNMFMAFTISLLGLLM), 29–49 (SLLCLEGMMLSLFVMMTMVIL), and 61–81 (IILLVFAACEAALGLSLLVMV).

This sequence belongs to the complex I subunit 4L family. As to quaternary structure, core subunit of respiratory chain NADH dehydrogenase (Complex I) which is composed of 45 different subunits.

It localises to the mitochondrion inner membrane. It carries out the reaction a ubiquinone + NADH + 5 H(+)(in) = a ubiquinol + NAD(+) + 4 H(+)(out). Core subunit of the mitochondrial membrane respiratory chain NADH dehydrogenase (Complex I) which catalyzes electron transfer from NADH through the respiratory chain, using ubiquinone as an electron acceptor. Part of the enzyme membrane arm which is embedded in the lipid bilayer and involved in proton translocation. The sequence is that of NADH-ubiquinone oxidoreductase chain 4L (MT-ND4L) from Vampyressa thyone (Northern little yellow-eared bat).